Reading from the N-terminus, the 31-residue chain is Elongation factor Tu (31 aa).

This sequence belongs to the GTP-binding elongation factor family. EF-Tu/EF-1A subfamily. Monomer.

It localises to the cytoplasm. In terms of biological role, this protein promotes the GTP-dependent binding of aminoacyl-tRNA to the A-site of ribosomes during protein biosynthesis. In Streptomyces laurentii, this protein is Elongation factor Tu (tuf).